We begin with the raw amino-acid sequence, 164 residues long: UBA-like domain-containing protein 2 (164 aa).

The residue at position 2 (Ser2) is an N-acetylserine. The segment at 128 to 164 (SSPTTFHHLHRPQPTWPPGAQQGGAQQKAMAAMDGQR) is disordered. Residues 146–164 (GAQQGGAQQKAMAAMDGQR) show a composition bias toward low complexity.

It belongs to the UBALD family.

The polypeptide is UBA-like domain-containing protein 2 (UBALD2) (Homo sapiens (Human)).